The sequence spans 359 residues: Phosphate acyltransferase (359 aa).

Belongs to the PlsX family. Homodimer. Probably interacts with PlsY.

The protein resides in the cytoplasm. The enzyme catalyses a fatty acyl-[ACP] + phosphate = an acyl phosphate + holo-[ACP]. Its pathway is lipid metabolism; phospholipid metabolism. In terms of biological role, catalyzes the reversible formation of acyl-phosphate (acyl-PO(4)) from acyl-[acyl-carrier-protein] (acyl-ACP). This enzyme utilizes acyl-ACP as fatty acyl donor, but not acyl-CoA. The sequence is that of Phosphate acyltransferase from Salmonella heidelberg (strain SL476).